We begin with the raw amino-acid sequence, 1059 residues long: Carbamoyl phosphate synthase large chain (1059 aa).

A carboxyphosphate synthetic domain region spans residues 1-401 (MPKRKDIQKI…SLLKACRSLE (401 aa)). ATP contacts are provided by arginine 129, arginine 169, glycine 175, glycine 176, arginine 208, isoleucine 210, glutamate 215, glycine 241, isoleucine 242, histidine 243, glutamine 284, and glutamate 298. One can recognise an ATP-grasp 1 domain in the interval 133-327 (KQLMEELGQP…IAKLAAKIAV (195 aa)). Residues glutamine 284, glutamate 298, and asparagine 300 each coordinate Mg(2+). Positions 284, 298, and 300 each coordinate Mn(2+). The tract at residues 402 to 546 (VCVDHNELPA…YSTYGFENES (145 aa)) is oligomerization domain. Residues 547-929 (VKSSKESVLV…ALYKAFEASY (383 aa)) are carbamoyl phosphate synthetic domain. The ATP-grasp 2 domain occupies 671-861 (EQALKELDIP…MAQVATRLIL (191 aa)). Positions 707, 746, 748, 752, 777, 778, 779, 780, 820, and 832 each coordinate ATP. Mg(2+) contacts are provided by glutamine 820, glutamate 832, and asparagine 834. The Mn(2+) site is built by glutamine 820, glutamate 832, and asparagine 834. An MGS-like domain is found at 930–1059 (LHLPNFGNIV…ESRSFTTEAI (130 aa)). The allosteric domain stretch occupies residues 930 to 1059 (LHLPNFGNIV…ESRSFTTEAI (130 aa)).

It belongs to the CarB family. As to quaternary structure, composed of two chains; the small (or glutamine) chain promotes the hydrolysis of glutamine to ammonia, which is used by the large (or ammonia) chain to synthesize carbamoyl phosphate. Tetramer of heterodimers (alpha,beta)4. Mg(2+) is required as a cofactor. Mn(2+) serves as cofactor.

The enzyme catalyses hydrogencarbonate + L-glutamine + 2 ATP + H2O = carbamoyl phosphate + L-glutamate + 2 ADP + phosphate + 2 H(+). It carries out the reaction hydrogencarbonate + NH4(+) + 2 ATP = carbamoyl phosphate + 2 ADP + phosphate + 2 H(+). It functions in the pathway amino-acid biosynthesis; L-arginine biosynthesis; carbamoyl phosphate from bicarbonate: step 1/1. Its pathway is pyrimidine metabolism; UMP biosynthesis via de novo pathway; (S)-dihydroorotate from bicarbonate: step 1/3. Functionally, large subunit of the glutamine-dependent carbamoyl phosphate synthetase (CPSase). CPSase catalyzes the formation of carbamoyl phosphate from the ammonia moiety of glutamine, carbonate, and phosphate donated by ATP, constituting the first step of 2 biosynthetic pathways, one leading to arginine and/or urea and the other to pyrimidine nucleotides. The large subunit (synthetase) binds the substrates ammonia (free or transferred from glutamine from the small subunit), hydrogencarbonate and ATP and carries out an ATP-coupled ligase reaction, activating hydrogencarbonate by forming carboxy phosphate which reacts with ammonia to form carbamoyl phosphate. This is Carbamoyl phosphate synthase large chain from Streptococcus sanguinis (strain SK36).